A 132-amino-acid chain; its full sequence is Small ribosomal subunit protein eS12 (132 aa).

Belongs to the eukaryotic ribosomal protein eS12 family.

The chain is Small ribosomal subunit protein eS12 (rps12) from Oreochromis niloticus (Nile tilapia).